Here is a 451-residue protein sequence, read N- to C-terminus: Aspartate aminotransferase, mitochondrial (451 aa).

3 residues coordinate L-aspartate: G52, W155, and N216. N6-(pyridoxal phosphate)lysine is present on K286. Position 423 (R423) interacts with L-aspartate.

This sequence belongs to the class-I pyridoxal-phosphate-dependent aminotransferase family. Homodimer. Pyridoxal 5'-phosphate is required as a cofactor.

The protein resides in the mitochondrion matrix. The catalysed reaction is L-aspartate + 2-oxoglutarate = oxaloacetate + L-glutamate. Plays a key role in amino acid metabolism. Important for metabolite exchange between mitochondria and cytosol. This Saccharomyces cerevisiae (strain ATCC 204508 / S288c) (Baker's yeast) protein is Aspartate aminotransferase, mitochondrial (AAT1).